An 859-amino-acid polypeptide reads, in one-letter code: DNA-directed RNA polymerase subunit Rpo1C (859 aa).

It belongs to the RNA polymerase beta' chain family. In terms of assembly, part of the RNA polymerase complex. In terms of processing, this protein undergoes a protein self splicing that involves a post-translational excision of the intervening region (intein) followed by peptide ligation.

The protein resides in the cytoplasm. It carries out the reaction RNA(n) + a ribonucleoside 5'-triphosphate = RNA(n+1) + diphosphate. Functionally, DNA-dependent RNA polymerase (RNAP) catalyzes the transcription of DNA into RNA using the four ribonucleoside triphosphates as substrates. Forms part of the jaw domain. The polypeptide is DNA-directed RNA polymerase subunit Rpo1C (Methanocaldococcus jannaschii (strain ATCC 43067 / DSM 2661 / JAL-1 / JCM 10045 / NBRC 100440) (Methanococcus jannaschii)).